Reading from the N-terminus, the 273-residue chain is Hydroxyethylthiazole kinase (273 aa).

A substrate-binding site is contributed by Met49. Positions 125 and 171 each coordinate ATP. A substrate-binding site is contributed by Gly198.

This sequence belongs to the Thz kinase family. Mg(2+) serves as cofactor.

The catalysed reaction is 5-(2-hydroxyethyl)-4-methylthiazole + ATP = 4-methyl-5-(2-phosphooxyethyl)-thiazole + ADP + H(+). It participates in cofactor biosynthesis; thiamine diphosphate biosynthesis; 4-methyl-5-(2-phosphoethyl)-thiazole from 5-(2-hydroxyethyl)-4-methylthiazole: step 1/1. In terms of biological role, catalyzes the phosphorylation of the hydroxyl group of 4-methyl-5-beta-hydroxyethylthiazole (THZ). This is Hydroxyethylthiazole kinase from Desulforudis audaxviator (strain MP104C).